We begin with the raw amino-acid sequence, 294 residues long: Agamous-like MADS-box protein AGL82 (294 aa).

The MADS-box domain maps to 1–51; sequence MVPKVVDLQRIANDKTRITTYKKRKASLYKKAQEFSTLCGVETCLIVYGPT.

Interacts with MEE14/CBP1.

The protein localises to the nucleus. Probable transcription factor that may function in the maintenance of the proper function of the central cell in pollen tube attraction. This Arabidopsis thaliana (Mouse-ear cress) protein is Agamous-like MADS-box protein AGL82.